We begin with the raw amino-acid sequence, 188 residues long: Large ribosomal subunit protein eL18 (188 aa).

The disordered stretch occupies residues 143-188 (RSAREAEKHFGPAPGVPHSHTKPHVRSKGRKFERARGRRASRAYKN). Basic residues-rich tracts occupy residues 161–171 (SHTKPHVRSKG) and 178–188 (RGRRASRAYKN).

It belongs to the eukaryotic ribosomal protein eL18 family.

It localises to the cytoplasm. The chain is Large ribosomal subunit protein eL18 (rpl-18) from Caenorhabditis briggsae.